A 341-amino-acid polypeptide reads, in one-letter code: THO complex subunit 6 homolog (341 aa).

WD repeat units lie at residues 22–61, 74–112, 124–165, 166–205, 215–254, 256–293, and 295–339; these read RLHM…SSEA, AHDG…GCKE, LEVP…RALR, GHTD…EVQT, SRPH…PTTV, PIRA…KAQV, and GSSP…AFSL. Residue Ser-180 is modified to Phosphoserine.

This sequence belongs to the WD repeat THOC6 family. Component of the THO subcomplex, which is composed of THOC1, THOC2, THOC3, THOC5, THOC6 and THOC7. The THO subcomplex interacts with DDX39B to form the THO-DDX39B complex which multimerizes into a 28-subunit tetrameric assembly. Component of the transcription/export (TREX) complex at least composed of ALYREF/THOC4, DDX39B, SARNP/CIP29, CHTOP and the THO subcomplex; in the complex interacts with THOC5; together with THOC5 and THOC7, plays a key structural role in the oligomerization of the THO-DDX39B complex. TREX seems to have a dynamic structure involving ATP-dependent remodeling.

Its subcellular location is the nucleus. The protein localises to the nucleus speckle. In terms of biological role, component of the THO subcomplex of the TREX complex which is thought to couple mRNA transcription, processing and nuclear export, and which specifically associates with spliced mRNA and not with unspliced pre-mRNA. Plays a key structural role in the oligomerization of the THO-DDX39B complex. TREX is recruited to spliced mRNAs by a transcription-independent mechanism, binds to mRNA upstream of the exon-junction complex (EJC) and is recruited in a splicing- and cap-dependent manner to a region near the 5' end of the mRNA where it functions in mRNA export to the cytoplasm via the TAP/NXF1 pathway. Plays a role in apoptosis negative control involved in brain development. The protein is THO complex subunit 6 homolog (Thoc6) of Mus musculus (Mouse).